We begin with the raw amino-acid sequence, 410 residues long: Neuroserpin (410 aa).

The N-terminal stretch at 1 to 16 is a signal peptide; sequence MAFLGLFSLLVLQSMA. 3 N-linked (GlcNAc...) asparagine glycosylation sites follow: asparagine 157, asparagine 321, and asparagine 401. Serine 403 carries an O-linked (Xyl...) (chondroitin sulfate) serine glycan.

Belongs to the serpin family. In terms of assembly, monomer. Has a tendency to form large polymers already at 41 and 45 degrees Celsius (in vitro). As to expression, detected in brain cortex and hippocampus pyramidal neurons (at protein level). Detected in cerebrospinal fluid (at protein level). Predominantly expressed in the brain.

The protein resides in the secreted. Its subcellular location is the cytoplasmic vesicle. It localises to the secretory vesicle lumen. It is found in the perikaryon. Serine protease inhibitor that inhibits plasminogen activators and plasmin but not thrombin. May be involved in the formation or reorganization of synaptic connections as well as for synaptic plasticity in the adult nervous system. May protect neurons from cell damage by tissue-type plasminogen activator. The protein is Neuroserpin (SERPINI1) of Homo sapiens (Human).